The primary structure comprises 147 residues: Large ribosomal subunit protein uL16 (147 aa).

This sequence belongs to the universal ribosomal protein uL16 family. As to quaternary structure, part of the 50S ribosomal subunit.

Functionally, binds 23S rRNA and is also seen to make contacts with the A and possibly P site tRNAs. The protein is Large ribosomal subunit protein uL16 of Clostridium botulinum (strain ATCC 19397 / Type A).